The primary structure comprises 147 residues: Deoxyuridine 5'-triphosphate nucleotidohydrolase (147 aa).

Substrate-binding positions include 68 to 70 (RSG), asparagine 81, and 85 to 87 (TID).

It belongs to the dUTPase family. It depends on Mg(2+) as a cofactor.

It carries out the reaction dUTP + H2O = dUMP + diphosphate + H(+). It participates in pyrimidine metabolism; dUMP biosynthesis; dUMP from dCTP (dUTP route): step 2/2. Its function is as follows. This enzyme is involved in nucleotide metabolism: it produces dUMP, the immediate precursor of thymidine nucleotides and it decreases the intracellular concentration of dUTP so that uracil cannot be incorporated into DNA. The chain is Deoxyuridine 5'-triphosphate nucleotidohydrolase from Solibacter usitatus (strain Ellin6076).